Consider the following 487-residue polypeptide: GTPase Der (487 aa).

EngA-type G domains follow at residues 3 to 166 (PVIA…PRDA) and 193 to 366 (IKIA…QSAV). GTP contacts are provided by residues 9-16 (GRPNVGKS), 56-60 (DTGGI), 118-121 (NKID), 199-206 (GRPNVGKS), 246-250 (DTAGV), and 311-314 (NKWD). The KH-like domain occupies 367-451 (TRWPTSRLTQ…PIRIEYKGGE (85 aa)). A compositionally biased stretch (basic and acidic residues) spans 448–461 (KGGENPYEGKKNTL). The segment at 448-487 (KGGENPYEGKKNTLTDRQVNKKRRLMSHHKKAEKKRRDKR) is disordered. Residues 467–487 (NKKRRLMSHHKKAEKKRRDKR) show a composition bias toward basic residues.

This sequence belongs to the TRAFAC class TrmE-Era-EngA-EngB-Septin-like GTPase superfamily. EngA (Der) GTPase family. In terms of assembly, associates with the 50S ribosomal subunit.

In terms of biological role, GTPase that plays an essential role in the late steps of ribosome biogenesis. This Pseudomonas putida (strain ATCC 47054 / DSM 6125 / CFBP 8728 / NCIMB 11950 / KT2440) protein is GTPase Der.